A 204-amino-acid polypeptide reads, in one-letter code: Holliday junction branch migration complex subunit RuvA (204 aa).

A domain I region spans residues 1–64; that stretch reads MIAQIRGKLI…QDSILLVGFC (64 aa). A domain II region spans residues 65–143; it reads TENEKQLFKL…GWTSKEQITF (79 aa). The segment at 144–154 is flexible linker; the sequence is INNKKDAIDQS. The tract at residues 154–204 is domain III; the sequence is SVMEEDAISALINLGYKSQAAKDAIDRVISEGGENKSLDVILKKALKVLAM.

This sequence belongs to the RuvA family. Homotetramer. Forms an RuvA(8)-RuvB(12)-Holliday junction (HJ) complex. HJ DNA is sandwiched between 2 RuvA tetramers; dsDNA enters through RuvA and exits via RuvB. An RuvB hexamer assembles on each DNA strand where it exits the tetramer. Each RuvB hexamer is contacted by two RuvA subunits (via domain III) on 2 adjacent RuvB subunits; this complex drives branch migration. In the full resolvosome a probable DNA-RuvA(4)-RuvB(12)-RuvC(2) complex forms which resolves the HJ.

It localises to the cytoplasm. In terms of biological role, the RuvA-RuvB-RuvC complex processes Holliday junction (HJ) DNA during genetic recombination and DNA repair, while the RuvA-RuvB complex plays an important role in the rescue of blocked DNA replication forks via replication fork reversal (RFR). RuvA specifically binds to HJ cruciform DNA, conferring on it an open structure. The RuvB hexamer acts as an ATP-dependent pump, pulling dsDNA into and through the RuvAB complex. HJ branch migration allows RuvC to scan DNA until it finds its consensus sequence, where it cleaves and resolves the cruciform DNA. The protein is Holliday junction branch migration complex subunit RuvA of Syntrophus aciditrophicus (strain SB).